A 956-amino-acid chain; its full sequence is Endogenous retrovirus group K member 6 Pol protein (956 aa).

A Reverse transcriptase domain is found at 57 to 245 (LEKGHIEPSF…TPFHYLGMQI (189 aa)). Residues 161-164 (LPQG) carry the LPQG motif. Positions 195–198 (CIDD) match the YXDD motif. Positions 460 to 590 (LENALTVFTD…ADLLVSSALI (131 aa)) constitute an RNase H type-1 domain. Mg(2+) contacts are provided by aspartate 469, glutamate 497, aspartate 517, and aspartate 582. The Integrase-type zinc-finger motif lies at 587–628 (SALIKAQELHALTHVNAAGLKNKFDVTWKQAKDIVQHCTQCQ). Zn(2+) contacts are provided by histidine 596, histidine 600, cysteine 624, and cysteine 627. An Integrase catalytic domain is found at 642-803 (RGLCPNALWQ…TSAEQHLTGK (162 aa)). The segment at residues 811–859 (KLIWWKDNKNKTWEIGKVITWGRGFACVSPGENQLPVWIPTRHLKFYNE) is a DNA-binding region (integrase-type). A disordered region spans residues 865-890 (KKSTSAETETSQSSTVDSQDEQNGDV). Residues 869 to 879 (SAETETSQSST) show a composition bias toward low complexity.

This sequence belongs to the beta type-B retroviral polymerase family. HERV class-II K(HML-2) pol subfamily. Post-translationally, cleavage sites that yield the mature proteins remain to be determined.

The enzyme catalyses DNA(n) + a 2'-deoxyribonucleoside 5'-triphosphate = DNA(n+1) + diphosphate. It catalyses the reaction Endonucleolytic cleavage to 5'-phosphomonoester.. Its function is as follows. Early post-infection, the reverse transcriptase converts the viral RNA genome into double-stranded viral DNA. The RNase H domain of the reverse transcriptase performs two functions. It degrades the RNA template and specifically removes the RNA primer from the RNA/DNA hybrid. Following nuclear import, the integrase catalyzes the insertion of the linear, double-stranded viral DNA into the host cell chromosome. Endogenous Pol proteins may have kept, lost or modified their original function during evolution. This is Endogenous retrovirus group K member 6 Pol protein (ERVK-6) from Homo sapiens (Human).